The primary structure comprises 231 residues: Uridylate kinase (231 aa).

9-12 (KLSG) serves as a coordination point for ATP. Position 49 (G49) interacts with UMP. ATP is bound by residues G50 and R54. UMP is bound by residues D69 and 130–137 (AGMPYFST). Residues N158, Y164, and D167 each coordinate ATP.

This sequence belongs to the UMP kinase family. Homohexamer.

Its subcellular location is the cytoplasm. The enzyme catalyses UMP + ATP = UDP + ADP. It functions in the pathway pyrimidine metabolism; CTP biosynthesis via de novo pathway; UDP from UMP (UMPK route): step 1/1. Inhibited by UTP. Its function is as follows. Catalyzes the reversible phosphorylation of UMP to UDP. This is Uridylate kinase from Tropheryma whipplei (strain Twist) (Whipple's bacillus).